We begin with the raw amino-acid sequence, 1049 residues long: Vacuolar membrane protease (1049 aa).

The Cytoplasmic portion of the chain corresponds to 1-11; the sequence is MKCYNPSAFVP. The chain crosses the membrane as a helical span at residues 12–32; the sequence is MAVTLVTVIIYLGVFIPLLII. Over 33-438 the chain is Vacuolar; that stretch reads QETVPSAPDD…TVFAVFKLRT (406 aa). A glycan (N-linked (GlcNAc...) asparagine) is linked at Asn50. The segment at 114 to 135 is disordered; sequence DAEAPESVPSPSNSNDGSAERY. An N-linked (GlcNAc...) asparagine glycan is attached at Asn157. Zn(2+) contacts are provided by His221 and Asp233. Glu267 (proton acceptor) is an active-site residue. Residues Glu268, Glu293, and His365 each coordinate Zn(2+). Residues 439-459 traverse the membrane as a helical segment; that stretch reads LFAWSLTLLIAAPLMLFAVSY. Residues 460 to 495 lie on the Cytoplasmic side of the membrane; sequence LLNRQDKFYFFAGSIKAKGPEDEPISLGGWRGAFRY. Residues 496-516 form a helical membrane-spanning segment; the sequence is PITLIITCAITFGCASLINKI. Residues 517 to 526 lie on the Vacuolar side of the membrane; that stretch reads NPMIVYSSPY. The chain crosses the membrane as a helical span at residues 527 to 547; it reads SVWSMSASLFFSIFWFIMAGC. Residues 548–557 are Cytoplasmic-facing; the sequence is NFVRPSALQR. A helical transmembrane segment spans residues 558-578; that stretch reads GYAFMWLFVFGWIILVAATVY. Residues 579–585 are Vacuolar-facing; that stretch reads EDRFKIS. Residues 586-606 traverse the membrane as a helical segment; that stretch reads GGYLFVFYEAAIFLATLIAIG. Over 607 to 740 the chain is Cytoplasmic; that stretch reads EQFALPKKST…LPIWTWLVQY (134 aa). Residues 621–686 form a disordered region; that stretch reads SQLDHDGNQD…IGGGAPTQRS (66 aa). Residues 622–633 show a composition bias toward basic and acidic residues; the sequence is QLDHDGNQDSHH. Acidic residues predominate over residues 655-664; it reads GQEEDPEDNV. A helical transmembrane segment spans residues 741 to 761; the sequence is LLVGPFILIVVGQVGLFLVAA. Residues 762–773 lie on the Vacuolar side of the membrane; it reads LHQTGTDGSPLL. A helical transmembrane segment spans residues 774–794; the sequence is LPYLVVAVFSILLLLPVTPFI. Topologically, residues 795 to 801 are cytoplasmic; sequence HRLTHHM. A helical transmembrane segment spans residues 802-822; it reads PTFFFLVFIGTLIYNLVAFPF. The Vacuolar segment spans residues 823-1049; it reads SPNNRYKAYF…LVEGSKRFVV (227 aa). N-linked (GlcNAc...) asparagine glycosylation occurs at Asn914.

It belongs to the peptidase M28 family. It depends on Zn(2+) as a cofactor.

It localises to the vacuole membrane. In terms of biological role, may be involved in vacuolar sorting and osmoregulation. This is Vacuolar membrane protease from Botryotinia fuckeliana (strain B05.10) (Noble rot fungus).